Reading from the N-terminus, the 221-residue chain is UPF0758 protein YicR (221 aa).

The 123-residue stretch at 99–221 folds into the MPN domain; sequence ALLSPEMTRE…YVSFAERGWI (123 aa). Residues His-170, His-172, and Asp-183 each coordinate Zn(2+). Positions 170–183 match the JAMM motif motif; that stretch reads HNHPSGCAEPSKAD.

This sequence belongs to the UPF0758 family. YicR subfamily.

This is UPF0758 protein YicR from Salmonella paratyphi A (strain ATCC 9150 / SARB42).